Consider the following 143-residue polypeptide: Transcriptional regulator MraZ (143 aa).

2 consecutive SpoVT-AbrB domains span residues 5-47 and 76-119; these read EYQH…PKEE and AGEC…SRER.

This sequence belongs to the MraZ family. Forms oligomers.

Its subcellular location is the cytoplasm. The protein resides in the nucleoid. The sequence is that of Transcriptional regulator MraZ from Heliobacterium modesticaldum (strain ATCC 51547 / Ice1).